A 95-amino-acid polypeptide reads, in one-letter code: Aspartyl/glutamyl-tRNA(Asn/Gln) amidotransferase subunit C (95 aa).

The protein belongs to the GatC family. In terms of assembly, heterotrimer of A, B and C subunits.

It carries out the reaction L-glutamyl-tRNA(Gln) + L-glutamine + ATP + H2O = L-glutaminyl-tRNA(Gln) + L-glutamate + ADP + phosphate + H(+). The catalysed reaction is L-aspartyl-tRNA(Asn) + L-glutamine + ATP + H2O = L-asparaginyl-tRNA(Asn) + L-glutamate + ADP + phosphate + 2 H(+). In terms of biological role, allows the formation of correctly charged Asn-tRNA(Asn) or Gln-tRNA(Gln) through the transamidation of misacylated Asp-tRNA(Asn) or Glu-tRNA(Gln) in organisms which lack either or both of asparaginyl-tRNA or glutaminyl-tRNA synthetases. The reaction takes place in the presence of glutamine and ATP through an activated phospho-Asp-tRNA(Asn) or phospho-Glu-tRNA(Gln). The chain is Aspartyl/glutamyl-tRNA(Asn/Gln) amidotransferase subunit C from Rhodospirillum rubrum (strain ATCC 11170 / ATH 1.1.1 / DSM 467 / LMG 4362 / NCIMB 8255 / S1).